Consider the following 200-residue polypeptide: Imidazoleglycerol-phosphate dehydratase (200 aa).

It belongs to the imidazoleglycerol-phosphate dehydratase family.

It is found in the cytoplasm. It catalyses the reaction D-erythro-1-(imidazol-4-yl)glycerol 3-phosphate = 3-(imidazol-4-yl)-2-oxopropyl phosphate + H2O. The protein operates within amino-acid biosynthesis; L-histidine biosynthesis; L-histidine from 5-phospho-alpha-D-ribose 1-diphosphate: step 6/9. The chain is Imidazoleglycerol-phosphate dehydratase from Chlorobium limicola (strain DSM 245 / NBRC 103803 / 6330).